A 64-amino-acid polypeptide reads, in one-letter code: MDNKVETGNIDVRLLELLVCPLTKGPLEYDAERSELVSRKARLAYPVRGGIPIMLPSEARSLTE.

Belongs to the UPF0434 family.

The protein is UPF0434 protein BOV_A0835 of Brucella ovis (strain ATCC 25840 / 63/290 / NCTC 10512).